We begin with the raw amino-acid sequence, 36 residues long: U1-ectatotoxin-Et1b subunit B (36 aa).

Residues C11 and C33 are joined by a disulfide bond.

It belongs to the ectatomin family. Ectatomin-Et subfamily. In terms of assembly, heterodimer of subunits A and B; disulfide-linked. Expressed by the venom gland.

It localises to the secreted. It is found in the target cell membrane. The polypeptide is U1-ectatotoxin-Et1b subunit B (Ectatomma tuberculatum (Selva ant)).